Reading from the N-terminus, the 389-residue chain is Lipid-A-disaccharide synthase (389 aa).

Belongs to the LpxB family.

It carries out the reaction a lipid X + a UDP-2-N,3-O-bis[(3R)-3-hydroxyacyl]-alpha-D-glucosamine = a lipid A disaccharide + UDP + H(+). It functions in the pathway bacterial outer membrane biogenesis; LPS lipid A biosynthesis. Its function is as follows. Condensation of UDP-2,3-diacylglucosamine and 2,3-diacylglucosamine-1-phosphate to form lipid A disaccharide, a precursor of lipid A, a phosphorylated glycolipid that anchors the lipopolysaccharide to the outer membrane of the cell. The polypeptide is Lipid-A-disaccharide synthase (Paraburkholderia xenovorans (strain LB400)).